The following is a 73-amino-acid chain: SIFamide-related peptide (73 aa).

A signal peptide spans 1 to 23 (MVSIRLTFALAIVAIIFAFSVDA). A Phenylalanine amide modification is found at F35. The propeptide occupies 39 to 73 (SNTMTDYEFTSRALSAICEVASETCTAWMSRQESN).

In terms of tissue distribution, expressed in brain, the retrocerebral complex and in ventral, thoracic and abdominal ganglia (at protein level).

It is found in the secreted. In Camponotus floridanus (Florida carpenter ant), this protein is SIFamide-related peptide.